Consider the following 263-residue polypeptide: 4-hydroxy-tetrahydrodipicolinate reductase (263 aa).

Residues 7 to 12 (GFKGRM), 96 to 98 (GTT), and 122 to 125 (APNF) contribute to the NAD(+) site. His152 functions as the Proton donor/acceptor in the catalytic mechanism. His153 contacts (S)-2,3,4,5-tetrahydrodipicolinate. The Proton donor role is filled by Lys156. 162 to 163 (GT) is a (S)-2,3,4,5-tetrahydrodipicolinate binding site.

Belongs to the DapB family.

It localises to the cytoplasm. It carries out the reaction (S)-2,3,4,5-tetrahydrodipicolinate + NAD(+) + H2O = (2S,4S)-4-hydroxy-2,3,4,5-tetrahydrodipicolinate + NADH + H(+). It catalyses the reaction (S)-2,3,4,5-tetrahydrodipicolinate + NADP(+) + H2O = (2S,4S)-4-hydroxy-2,3,4,5-tetrahydrodipicolinate + NADPH + H(+). Its pathway is amino-acid biosynthesis; L-lysine biosynthesis via DAP pathway; (S)-tetrahydrodipicolinate from L-aspartate: step 4/4. Catalyzes the conversion of 4-hydroxy-tetrahydrodipicolinate (HTPA) to tetrahydrodipicolinate. The sequence is that of 4-hydroxy-tetrahydrodipicolinate reductase from Listeria monocytogenes serotype 4b (strain F2365).